The sequence spans 315 residues: GTP cyclohydrolase MptA (315 aa).

This sequence belongs to the GTP cyclohydrolase IV family. As to quaternary structure, homodimer. Requires Fe(2+) as cofactor.

It carries out the reaction GTP + H2O = 7,8-dihydroneopterin 2',3'-cyclic phosphate + formate + diphosphate + H(+). The protein operates within cofactor biosynthesis; 5,6,7,8-tetrahydromethanopterin biosynthesis. Its function is as follows. Converts GTP to 7,8-dihydro-D-neopterin 2',3'-cyclic phosphate, the first intermediate in the biosynthesis of coenzyme methanopterin. This Methanococcus maripaludis (strain C6 / ATCC BAA-1332) protein is GTP cyclohydrolase MptA.